Consider the following 313-residue polypeptide: Ribosomal RNA small subunit methyltransferase H (313 aa).

Residues 36–38 (GGH), Asp56, Phe80, Asp102, and Gln109 contribute to the S-adenosyl-L-methionine site.

It belongs to the methyltransferase superfamily. RsmH family.

It localises to the cytoplasm. The catalysed reaction is cytidine(1402) in 16S rRNA + S-adenosyl-L-methionine = N(4)-methylcytidine(1402) in 16S rRNA + S-adenosyl-L-homocysteine + H(+). Specifically methylates the N4 position of cytidine in position 1402 (C1402) of 16S rRNA. This chain is Ribosomal RNA small subunit methyltransferase H, found in Haemophilus ducreyi (strain 35000HP / ATCC 700724).